Here is a 566-residue protein sequence, read N- to C-terminus: MOB kinase activator-like 2 (566 aa).

2 disordered regions span residues 28 to 57 and 74 to 118; these read ADAT…SSLS and GRAV…GAQA. Over residues 35–57 the composition is skewed to low complexity; the sequence is SSTAPQTPTASTPRPSSSHSSLS. Gly residues predominate over residues 85 to 115; that stretch reads QNGGKGNASGAGGGAGGGGAGGASGGTGGTG. 4 residues coordinate Zn(2+): Cys209, Cys214, His289, and His294. 2 disordered regions span residues 346–407 and 498–541; these read GGCQ…SASA and FSNN…QCNA. The segment covering 367-388 has biased composition (low complexity); that stretch reads LQHQSLQQQQQHHNSSSNSTSS. The segment covering 394-407 has biased composition (polar residues); that stretch reads VNSQSNNGSTSASA. The span at 498-507 shows a compositional bias: low complexity; that stretch reads FSNNNNNNHN. A compositionally biased stretch (basic residues) spans 508–526; that stretch reads LNHHHHHHHHHGHHGHHHA.

The protein belongs to the MOB1/phocein family. As to quaternary structure, interacts with and activates trc, also interacts with wts.

It is found in the cytoplasm. It localises to the nucleus. Required for the normal morphogenesis of a variety of polarized outgrowths including epidermal hairs, bristles, arista laterals, and dendrites. The sequence is that of MOB kinase activator-like 2 (Mob2) from Drosophila melanogaster (Fruit fly).